The primary structure comprises 1298 residues: Phosphoribosylformylglycinamidine synthase (1298 aa).

The disordered stretch occupies residues 303–327; sequence FPGAATGSGGEIRDEGATGRGAKPK. ATP-binding positions include 305–316, 384–386, and alanine 676; these read GAATGSGGEIRD and TGY. 4 residues coordinate Mg(2+): aspartate 677, glutamate 716, asparagine 720, and aspartate 884. Serine 886 is an ATP binding site. One can recognise a Glutamine amidotransferase type-1 domain in the interval 1045-1298; the sequence is VAVLREQGVN…MFRNARAWVN (254 aa). Residue cysteine 1138 is the Nucleophile of the active site. Residues histidine 1263 and glutamate 1265 contribute to the active site.

In the N-terminal section; belongs to the FGAMS family. In terms of assembly, monomer.

It is found in the cytoplasm. The catalysed reaction is N(2)-formyl-N(1)-(5-phospho-beta-D-ribosyl)glycinamide + L-glutamine + ATP + H2O = 2-formamido-N(1)-(5-O-phospho-beta-D-ribosyl)acetamidine + L-glutamate + ADP + phosphate + H(+). Its pathway is purine metabolism; IMP biosynthesis via de novo pathway; 5-amino-1-(5-phospho-D-ribosyl)imidazole from N(2)-formyl-N(1)-(5-phospho-D-ribosyl)glycinamide: step 1/2. Its function is as follows. Phosphoribosylformylglycinamidine synthase involved in the purines biosynthetic pathway. Catalyzes the ATP-dependent conversion of formylglycinamide ribonucleotide (FGAR) and glutamine to yield formylglycinamidine ribonucleotide (FGAM) and glutamate. This Pseudomonas syringae pv. tomato (strain ATCC BAA-871 / DC3000) protein is Phosphoribosylformylglycinamidine synthase.